The following is a 213-amino-acid chain: MKAFTKITAIVAPLDRSNVDTDAIIPKQFLKSIKRSGFGPNAFDEWRYLDHGEPGMDNSKRPLNPDFSLNQPRYQGAQILLTRKNFGCGSSREHAPWALDDYGFRAVIAPSFADIFFNNCYKNGLLPIVLTEEQVDRLFKEVEANEGYRLSIDLAEQTLTTPSGETFTFDITEHRKHCLLNGLDEIGLTLQHADEIHAFEEKRRQSQPWLFNG.

Belongs to the LeuD family. LeuD type 1 subfamily. As to quaternary structure, heterodimer of LeuC and LeuD.

The catalysed reaction is (2R,3S)-3-isopropylmalate = (2S)-2-isopropylmalate. The protein operates within amino-acid biosynthesis; L-leucine biosynthesis; L-leucine from 3-methyl-2-oxobutanoate: step 2/4. Its function is as follows. Catalyzes the isomerization between 2-isopropylmalate and 3-isopropylmalate, via the formation of 2-isopropylmaleate. This chain is 3-isopropylmalate dehydratase small subunit, found in Neisseria meningitidis serogroup A / serotype 4A (strain DSM 15465 / Z2491).